The primary structure comprises 486 residues: Vacuolar protein sorting-associated protein 73 (486 aa).

Over 1 to 26 (MNRILSSASLLSNVSMPRQNKHKITK) the chain is Cytoplasmic. Residues 27–47 (ALCYAIIVASIGSIQFGYHLS) form a helical membrane-spanning segment. Residues 48–90 (ELNAPQQVLSCSEFDIPMEGYPYDRTWLGKRGYKQCIPLNDEQ) lie on the Mitochondrial intermembrane side of the membrane. The chain crosses the membrane as a helical span at residues 91–111 (IGIVTSVFCIGGILGSYFATS). Residues 112-119 (LANIYGRK) lie on the Cytoplasmic side of the membrane. A helical transmembrane segment spans residues 120–140 (FSSLINCTLNIVGSLIIFNSN). Residues 141–146 (SYRGLI) are Mitochondrial intermembrane-facing. A helical transmembrane segment spans residues 147-167 (IGRILVGISCGSLIVIIPLFI). Residues 168 to 178 (KEVAPSGWEGL) are Cytoplasmic-facing. A helical transmembrane segment spans residues 179-199 (LGSMTQICIRLGVLLTQGIAL). The Mitochondrial intermembrane segment spans residues 200-208 (PLTDSYRWR). Residues 209-229 (WILFGSFLIAVLNFFMWFIVD) traverse the membrane as a helical segment. Over 230 to 305 (ESPKWLLAHG…RDRTNVKSRH (76 aa)) the chain is Cytoplasmic. A helical transmembrane segment spans residues 306–326 (VITVLLFGQQFCGINSIVLYG). At 327 to 342 (TKIISQLYPQHAIRIN) the chain is on the mitochondrial intermembrane side. Residues 343–363 (FFISMVNVLVTILVSLLIHSL) traverse the membrane as a helical segment. The Cytoplasmic portion of the chain corresponds to 364–366 (PRK). Residues 367 to 387 (PLLMTSTVLVSVTAFIMGIAM) traverse the membrane as a helical segment. The Mitochondrial intermembrane portion of the chain corresponds to 388 to 396 (NHNKMNLLI). A helical membrane pass occupies residues 397–417 (VFSFIYMGVFTMGLNPLPFII). The Cytoplasmic portion of the chain corresponds to 418 to 432 (MREVSKPQDMVLAQR). A helical transmembrane segment spans residues 433 to 453 (YGTICNWVGTFIIAYTFPIIH). Position 454 (Asp-454) is a topological domain, mitochondrial intermembrane. A helical transmembrane segment spans residues 455–475 (VLSGYVFIIFAIIACSISAFI). The Cytoplasmic portion of the chain corresponds to 476–486 (WKKVPETKRSG).

Belongs to the major facilitator superfamily. Sugar transporter (TC 2.A.1.1) family.

It localises to the mitochondrion membrane. In terms of biological role, may be involved in vacuolar protein sorting. The protein is Vacuolar protein sorting-associated protein 73 (VPS73) of Saccharomyces cerevisiae (strain ATCC 204508 / S288c) (Baker's yeast).